Here is a 400-residue protein sequence, read N- to C-terminus: MDKSLFEQARPILEQIQDNGFEAYYVGGSVRDYVMGRNIHDIDITTSATPDEIESIFSHTIPVGKEHGTINVVFNDENYEVTTFRAEEDYVDHRRPSGVTFVRDLYEDLQRRDFTMNAIAMDTANKLYDYFDGQQDINNRIIRTVGIAEERFQEDALRMIRCLRFQSQLSFDIATETFEAMRTQMADIKFLSIERIVIELTKLMRGINVEKSFNHLKSLKAFNYMPYFEHLDMNQINVTEPIDLELLIAIVSVKFDINYSLKPLKLSNRQVKDINQYIQIMNALPSIITKEQLKMFVYDYDTNLIKNVMVAADVLKANDIQGHEPLIVNLQTIDETLHRLPMHNRKDMMVNGGVLMAHLNAKSGPWLKDLLRQIEIAIVTGKVSNEETEILKWVDNHVKI.

2 residues coordinate ATP: Gly-28 and Arg-31. Positions 28 and 31 each coordinate CTP. Mg(2+)-binding residues include Asp-41 and Asp-43. ATP-binding residues include Arg-112, Asp-155, Arg-158, Arg-161, and Arg-164. Residues Arg-112, Asp-155, Arg-158, Arg-161, and Arg-164 each coordinate CTP.

This sequence belongs to the tRNA nucleotidyltransferase/poly(A) polymerase family. Bacterial CCA-adding enzyme type 3 subfamily. As to quaternary structure, homodimer. The cofactor is Mg(2+).

It catalyses the reaction a tRNA precursor + 2 CTP + ATP = a tRNA with a 3' CCA end + 3 diphosphate. The catalysed reaction is a tRNA with a 3' CCA end + 2 CTP + ATP = a tRNA with a 3' CCACCA end + 3 diphosphate. In terms of biological role, catalyzes the addition and repair of the essential 3'-terminal CCA sequence in tRNAs without using a nucleic acid template. Adds these three nucleotides in the order of C, C, and A to the tRNA nucleotide-73, using CTP and ATP as substrates and producing inorganic pyrophosphate. tRNA 3'-terminal CCA addition is required both for tRNA processing and repair. Also involved in tRNA surveillance by mediating tandem CCA addition to generate a CCACCA at the 3' terminus of unstable tRNAs. While stable tRNAs receive only 3'-terminal CCA, unstable tRNAs are marked with CCACCA and rapidly degraded. This is CCA-adding enzyme from Staphylococcus aureus (strain MRSA252).